We begin with the raw amino-acid sequence, 526 residues long: Histone-lysine N-methyltransferase SET5 (526 aa).

The SET domain maps to 112–403; the sequence is AKVEVKFIDD…KGEQIRITYV (292 aa). Residues 450-492 are disordered; it reads NLGVEKIDSNDNSEDGSKKSTGNRKSSMREAQPDLKEILKNGK. Residues 476–492 show a composition bias toward basic and acidic residues; sequence SMREAQPDLKEILKNGK. Ser-517 is subject to Phosphoserine.

This sequence belongs to the class V-like SAM-binding methyltransferase superfamily. Histone-lysine methyltransferase family. SET5 subfamily.

It is found in the nucleus. The protein localises to the chromosome. It localises to the cytoplasm. The enzyme catalyses L-lysyl-[histone] + S-adenosyl-L-methionine = N(6)-methyl-L-lysyl-[histone] + S-adenosyl-L-homocysteine + H(+). Histone methyltransferase that monomethylates 'Lys-5', 'Lys-8' and 'Lys-12' of histone H4 (H4K5me1, H4K8me1 and H4K12me1, respectively), thereby controlling gene expression and remodeling chromatin structures. The sequence is that of Histone-lysine N-methyltransferase SET5 (SET5) from Saccharomyces cerevisiae (strain YJM789) (Baker's yeast).